A 365-amino-acid polypeptide reads, in one-letter code: NADH-quinone oxidoreductase subunit D (365 aa).

It belongs to the complex I 49 kDa subunit family. As to quaternary structure, NDH-1 is composed of 14 different subunits. Subunits NuoB, C, D, E, F, and G constitute the peripheral sector of the complex.

The protein localises to the cell membrane. It catalyses the reaction a quinone + NADH + 5 H(+)(in) = a quinol + NAD(+) + 4 H(+)(out). NDH-1 shuttles electrons from NADH, via FMN and iron-sulfur (Fe-S) centers, to quinones in the respiratory chain. The immediate electron acceptor for the enzyme in this species is believed to be a menaquinone. Couples the redox reaction to proton translocation (for every two electrons transferred, four hydrogen ions are translocated across the cytoplasmic membrane), and thus conserves the redox energy in a proton gradient. The chain is NADH-quinone oxidoreductase subunit D from Carboxydothermus hydrogenoformans (strain ATCC BAA-161 / DSM 6008 / Z-2901).